The following is a 276-amino-acid chain: 2-dehydro-3-deoxyphosphooctonate aldolase (276 aa).

Belongs to the KdsA family.

The protein localises to the cytoplasm. It carries out the reaction D-arabinose 5-phosphate + phosphoenolpyruvate + H2O = 3-deoxy-alpha-D-manno-2-octulosonate-8-phosphate + phosphate. Its pathway is carbohydrate biosynthesis; 3-deoxy-D-manno-octulosonate biosynthesis; 3-deoxy-D-manno-octulosonate from D-ribulose 5-phosphate: step 2/3. It participates in bacterial outer membrane biogenesis; lipopolysaccharide biosynthesis. The polypeptide is 2-dehydro-3-deoxyphosphooctonate aldolase (Xanthomonas euvesicatoria pv. vesicatoria (strain 85-10) (Xanthomonas campestris pv. vesicatoria)).